We begin with the raw amino-acid sequence, 237 residues long: Methylthioribulose-1-phosphate dehydratase (237 aa).

Residue C97 coordinates substrate. H114 and H116 together coordinate Zn(2+). The active-site Proton donor/acceptor is E143. Position 199 (H199) interacts with Zn(2+).

The protein belongs to the aldolase class II family. MtnB subfamily. Zn(2+) serves as cofactor.

The protein resides in the cytoplasm. The enzyme catalyses 5-(methylsulfanyl)-D-ribulose 1-phosphate = 5-methylsulfanyl-2,3-dioxopentyl phosphate + H2O. It participates in amino-acid biosynthesis; L-methionine biosynthesis via salvage pathway; L-methionine from S-methyl-5-thio-alpha-D-ribose 1-phosphate: step 2/6. In terms of biological role, catalyzes the dehydration of methylthioribulose-1-phosphate (MTRu-1-P) into 2,3-diketo-5-methylthiopentyl-1-phosphate (DK-MTP-1-P). This Coccidioides posadasii (strain C735) (Valley fever fungus) protein is Methylthioribulose-1-phosphate dehydratase.